The chain runs to 186 residues: Adenylate kinase (186 aa).

An ATP-binding site is contributed by G11 to T16. An NMP region spans residues S31–V60. Residues T32, R37, D58–V60, G86–R89, and Q93 each bind AMP. The tract at residues G127–D137 is LID. R128 is a binding site for ATP. Positions 134 and 145 each coordinate AMP. G173 contributes to the ATP binding site.

This sequence belongs to the adenylate kinase family. As to quaternary structure, monomer.

The protein resides in the cytoplasm. It carries out the reaction AMP + ATP = 2 ADP. It participates in purine metabolism; AMP biosynthesis via salvage pathway; AMP from ADP: step 1/1. Its function is as follows. Catalyzes the reversible transfer of the terminal phosphate group between ATP and AMP. Plays an important role in cellular energy homeostasis and in adenine nucleotide metabolism. This is Adenylate kinase from Leptospira biflexa serovar Patoc (strain Patoc 1 / Ames).